Reading from the N-terminus, the 203-residue chain is dTTP/UTP pyrophosphatase (203 aa).

The Proton acceptor role is filled by D74.

It belongs to the Maf family. YhdE subfamily. A divalent metal cation is required as a cofactor.

It localises to the cytoplasm. It catalyses the reaction dTTP + H2O = dTMP + diphosphate + H(+). It carries out the reaction UTP + H2O = UMP + diphosphate + H(+). Functionally, nucleoside triphosphate pyrophosphatase that hydrolyzes dTTP and UTP. May have a dual role in cell division arrest and in preventing the incorporation of modified nucleotides into cellular nucleic acids. The sequence is that of dTTP/UTP pyrophosphatase from Treponema denticola (strain ATCC 35405 / DSM 14222 / CIP 103919 / JCM 8153 / KCTC 15104).